Here is a 242-residue protein sequence, read N- to C-terminus: Probable transcriptional regulatory protein HEAR0561 (242 aa).

It belongs to the TACO1 family.

It is found in the cytoplasm. In Herminiimonas arsenicoxydans, this protein is Probable transcriptional regulatory protein HEAR0561.